The chain runs to 204 residues: Somatotropin (204 aa).

The first 17 residues, methionine 1–serine 17, serve as a signal peptide directing secretion. Glutamine 18 carries the post-translational modification Pyrrolidone carboxylic acid. Histidine 36 lines the Zn(2+) pocket. Cysteine 69 and cysteine 177 are oxidised to a cystine. Residue glutamate 186 coordinates Zn(2+). Cysteine 194 and cysteine 202 are joined by a disulfide.

Belongs to the somatotropin/prolactin family.

The protein resides in the secreted. Growth hormone plays an important role in growth control and is involved in the regulation of several anabolic processes. Implicated as an osmoregulatory substance important for seawater adaptation. The protein is Somatotropin (gh) of Sparus aurata (Gilthead sea bream).